Here is a 322-residue protein sequence, read N- to C-terminus: HPr kinase/phosphorylase (322 aa).

Active-site residues include His143 and Lys164. Gly158 to Ser165 contributes to the ATP binding site. A Mg(2+)-binding site is contributed by Ser165. Asp182 serves as the catalytic Proton acceptor; for phosphorylation activity. Proton donor; for dephosphorylation activity. An important for the catalytic mechanism of both phosphorylation and dephosphorylation region spans residues Met206–Asn215. Glu207 contributes to the Mg(2+) binding site. The active site involves Arg250. An important for the catalytic mechanism of dephosphorylation region spans residues Pro271–Arg276.

The protein belongs to the HPrK/P family. As to quaternary structure, homohexamer. Mg(2+) serves as cofactor.

It carries out the reaction [HPr protein]-L-serine + ATP = [HPr protein]-O-phospho-L-serine + ADP + H(+). The enzyme catalyses [HPr protein]-O-phospho-L-serine + phosphate + H(+) = [HPr protein]-L-serine + diphosphate. In terms of biological role, catalyzes the ATP- as well as the pyrophosphate-dependent phosphorylation of a specific serine residue in HPr, a phosphocarrier protein of the phosphoenolpyruvate-dependent sugar phosphotransferase system (PTS). HprK/P also catalyzes the pyrophosphate-producing, inorganic phosphate-dependent dephosphorylation (phosphorolysis) of seryl-phosphorylated HPr (P-Ser-HPr). The polypeptide is HPr kinase/phosphorylase (Leptospira biflexa serovar Patoc (strain Patoc 1 / Ames)).